A 640-amino-acid chain; its full sequence is Isoniazid-induced protein IniA (640 aa).

Residues Ile497–Ile519 form a helical membrane-spanning segment. Residues Arg560 to Glu628 are a coiled coil.

In terms of assembly, forms multimeric structures containing a central pore.

The protein localises to the cell membrane. Functionally, participates in the development of tolerance to both isoniazid and ethambutol. May function through a MDR-pump like mechanism, although it does not appear to directly transport isoniazid from the cell. The polypeptide is Isoniazid-induced protein IniA (iniA) (Mycobacterium tuberculosis (strain CDC 1551 / Oshkosh)).